A 362-amino-acid polypeptide reads, in one-letter code: UDP-3-O-acylglucosamine N-acyltransferase (362 aa).

The Proton acceptor role is filled by His-251.

Belongs to the transferase hexapeptide repeat family. LpxD subfamily. As to quaternary structure, homotrimer.

It catalyses the reaction a UDP-3-O-[(3R)-3-hydroxyacyl]-alpha-D-glucosamine + a (3R)-hydroxyacyl-[ACP] = a UDP-2-N,3-O-bis[(3R)-3-hydroxyacyl]-alpha-D-glucosamine + holo-[ACP] + H(+). It participates in bacterial outer membrane biogenesis; LPS lipid A biosynthesis. Its function is as follows. Catalyzes the N-acylation of UDP-3-O-acylglucosamine using 3-hydroxyacyl-ACP as the acyl donor. Is involved in the biosynthesis of lipid A, a phosphorylated glycolipid that anchors the lipopolysaccharide to the outer membrane of the cell. This chain is UDP-3-O-acylglucosamine N-acyltransferase, found in Cupriavidus pinatubonensis (strain JMP 134 / LMG 1197) (Cupriavidus necator (strain JMP 134)).